The following is a 205-amino-acid chain: Putative 3-methyladenine DNA glycosylase (205 aa).

It belongs to the DNA glycosylase MPG family.

The sequence is that of Putative 3-methyladenine DNA glycosylase from Bacillus cereus (strain B4264).